The sequence spans 182 residues: Ribulose bisphosphate carboxylase small subunit, chloroplastic 5 (182 aa).

A chloroplast-targeting transit peptide spans 1-49 (MASSLMSNAATTMAAATTTAQANMVAPFNGLKSISAFPVTRKNNDITSV).

It belongs to the RuBisCO small chain family. As to quaternary structure, heterohexadecamer of 8 large and 8 small subunits.

It is found in the plastid. Its subcellular location is the chloroplast. In terms of biological role, ruBisCO catalyzes two reactions: the carboxylation of D-ribulose 1,5-bisphosphate, the primary event in carbon dioxide fixation, as well as the oxidative fragmentation of the pentose substrate. Both reactions occur simultaneously and in competition at the same active site. Although the small subunit is not catalytic it is essential for maximal activity. In Mesembryanthemum crystallinum (Common ice plant), this protein is Ribulose bisphosphate carboxylase small subunit, chloroplastic 5.